The chain runs to 183 residues: SAGA-associated factor 11 homolog (183 aa).

Residues 98–119 (CSCPNCNRIVAASRFAPHLEKC) form an SGF11-type zinc finger. The disordered stretch occupies residues 140 to 167 (GGNYFGADEDDEDDADWSGEKRKKKIAP). Positions 146-156 (ADEDDEDDADW) are enriched in acidic residues.

It belongs to the SGF11 family. In terms of assembly, component of some SAGA transcription coactivator-HAT complexes. Within the SAGA complex, participates in a subcomplex of SAGA called the DUB module (deubiquitination module).

It is found in the nucleus. In terms of biological role, component of the transcription regulatory histone acetylation (HAT) complex SAGA, a multiprotein complex that activates transcription by remodeling chromatin and mediating histone acetylation and deubiquitination. Within the SAGA complex, participates in a subcomplex that specifically deubiquitinates histone H2B. The SAGA complex is recruited to specific gene promoters by activators, where it is required for transcription. In Culex quinquefasciatus (Southern house mosquito), this protein is SAGA-associated factor 11 homolog.